The primary structure comprises 454 residues: uncharacterized protein (454 aa).

The HNH domain occupies 364–405; it reads CSRPGCDAPAYHSEVHHVTPWTTTHRTDINDLTLACGPDNRL.

The protein belongs to the Rv1128c/1148c/1588c/1702c/1945/3466 family.

This is an uncharacterized protein from Mycobacterium tuberculosis (strain ATCC 25618 / H37Rv).